The chain runs to 87 residues: Costars family protein (87 aa).

It belongs to the costars family.

The protein is Costars family protein of Oryza sativa subsp. indica (Rice).